The following is a 430-amino-acid chain: Neuropeptide FF receptor 1 (430 aa).

Residues 1–20 are disordered; that stretch reads MEGEPSQPPNSSWPLSQNGT. The Extracellular segment spans residues 1–43; sequence MEGEPSQPPNSSWPLSQNGTNTEATPATNLTFSSYYQHTSPVA. The span at 9 to 20 shows a compositional bias: polar residues; it reads PNSSWPLSQNGT. N-linked (GlcNAc...) asparagine glycans are attached at residues N10, N18, and N29. The helical transmembrane segment at 44–64 threads the bilayer; the sequence is AMFIVAYALIFLLCMVGNTLV. The Cytoplasmic segment spans residues 65–80; the sequence is CFIVLKNRHMHTVTNM. A helical transmembrane segment spans residues 81–101; it reads FILNLAVSDLLVGIFCMPTTL. At 102–117 the chain is on the extracellular side; that stretch reads VDNLITGWPFDNATCK. N-linked (GlcNAc...) asparagine glycosylation is present at N113. An intrachain disulfide couples C116 to C203. Residues 118 to 138 traverse the membrane as a helical segment; it reads MSGLVQGMSVSASVFTLVAIA. Residues 139-158 lie on the Cytoplasmic side of the membrane; sequence VERFRCIVHPFREKLTLRKA. The chain crosses the membrane as a helical span at residues 159–179; it reads LVTIAVIWALALLIMCPSAVT. At 180–214 the chain is on the extracellular side; that stretch reads LTVTREEHHFMVDARNRSYPLYSCWEAWPEKGMRR. N-linked (GlcNAc...) asparagine glycosylation occurs at N195. A helical transmembrane segment spans residues 215–235; sequence VYTTVLFSHIYLAPLALIVVM. Over 236 to 271 the chain is Cytoplasmic; that stretch reads YARIARKLCQAPGPAPGGEEAADPRASRRRARVVHM. The chain crosses the membrane as a helical span at residues 272–292; sequence LVMVALFFTLSWLPLWALLLL. The Extracellular segment spans residues 293–307; sequence IDYGQLSAPQLHLVT. The helical transmembrane segment at 308–328 threads the bilayer; sequence VYAFPFAHWLAFFNSSANPII. The Cytoplasmic portion of the chain corresponds to 329–430; that stretch reads YGYFNENFRR…LPLTIPAWDI (102 aa). The span at 379-404 shows a compositional bias: low complexity; the sequence is SDSGLPSESGPSSGAPRPGRLPLRNG. Residues 379–413 are disordered; the sequence is SDSGLPSESGPSSGAPRPGRLPLRNGRVAHHGLPR.

The protein belongs to the G-protein coupled receptor 1 family.

Its subcellular location is the cell membrane. Receptor for NPAF (A-18-F-amide) and NPFF (F-8-F-amide) neuropeptides, also known as morphine-modulating peptides. Can also be activated by a variety of naturally occurring or synthetic FMRF-amide like ligands. This receptor mediates its action by association with G proteins that activate a phosphatidylinositol-calcium second messenger system. In Homo sapiens (Human), this protein is Neuropeptide FF receptor 1.